We begin with the raw amino-acid sequence, 463 residues long: SPARC-related modular calcium-binding protein 1 (463 aa).

An N-terminal signal peptide occupies residues Met-1–Gly-25. Residues Ser-36–Asp-88 enclose the Kazal-like domain. 6 disulfides stabilise this stretch: Cys-42-Cys-73, Cys-46-Cys-66, Cys-55-Cys-86, Cys-94-Cys-117, Cys-128-Cys-135, and Cys-137-Cys-157. The region spanning Gln-91 to Cys-157 is the Thyroglobulin type-1 1 domain. The N-linked (GlcNAc...) asparagine glycan is linked to Asn-224. A Thyroglobulin type-1 2 domain is found at Val-234–Cys-302. Intrachain disulfides connect Cys-237-Cys-261, Cys-272-Cys-279, and Cys-281-Cys-302. EF-hand domains lie at Leu-369–Lys-404 and Lys-406–Gly-441. Ca(2+)-binding residues include Asp-382, Asn-384, Ser-386, Asp-388, Glu-393, Asp-419, Asn-421, Asp-423, and Glu-430. N-linked (GlcNAc...) asparagine glycosylation is present at Asn-384.

In terms of processing, glycosylated. Widely expressed in many tissues with a strongest signal in ovary.

Its subcellular location is the secreted. It is found in the extracellular space. The protein localises to the extracellular matrix. The protein resides in the basement membrane. Its function is as follows. Probable regulator of osteoblast differentiation. Plays essential roles in both eye and limb development. The chain is SPARC-related modular calcium-binding protein 1 (Smoc1) from Mus musculus (Mouse).